We begin with the raw amino-acid sequence, 950 residues long: Protocadherin alpha-13 (950 aa).

The first 29 residues, 1–29 (MLSSWQGGPRPRQLLLWLLILAAWETGSG), serve as a signal peptide directing secretion. Over 30–697 (QLHYSVPEEA…GPEAALVDVN (668 aa)) the chain is Extracellular. 6 consecutive Cadherin domains span residues 34 to 133 (SVPE…PPIF), 134 to 242 (PESK…APEF), 243 to 350 (YQSV…APEV), 351 to 455 (TITS…APAF), 456 to 565 (AQPE…APAL), and 581 to 678 (MPRS…APQA). N-linked (GlcNAc...) asparagine glycans are attached at residues N257 and N265. The N-linked (GlcNAc...) asparagine glycan is linked to N548. Residues 698–718 (VYLIIAICAVSSLLVLTLLLY) traverse the membrane as a helical segment. At 719–950 (TALRCSAPPT…GNSTTDNSDQ (232 aa)) the chain is on the cytoplasmic side. PXXP repeat units follow at residues 734 to 737 (PGKP), 774 to 777 (PSLP), 799 to 802 (PRQP), 832 to 835 (PGGP), 873 to 876 (PGNP), and 891 to 894 (PGSP). Residues 734-894 (PGKPTLVCSS…PDKFIIPGSP (161 aa)) are 6 X 4 AA repeats of P-X-X-P. 2 disordered regions span residues 774–808 (PSLPPCLGSAEGTGQREEDSEGLKEPRQPNPDWRY) and 827–950 (ILRA…NSDQ). Residues 787 to 800 (GQREEDSEGLKEPR) show a composition bias toward basic and acidic residues. A compositionally biased stretch (basic and acidic residues) spans 909–923 (DKSDFITFGKKEETK).

It localises to the cell membrane. In terms of biological role, potential calcium-dependent cell-adhesion protein. May be involved in the establishment and maintenance of specific neuronal connections in the brain. The sequence is that of Protocadherin alpha-13 (PCDHA13) from Pan troglodytes (Chimpanzee).